Here is a 190-residue protein sequence, read N- to C-terminus: Jupiter microtubule associated homolog 2 (190 aa).

Residue methionine 1 is modified to N-acetylmethionine. Positions 1 to 190 (MFQVPDSEGG…PGGKSSISFY (190 aa)) are disordered. Serine 30 is subject to Phosphoserine. Position 35 is a phosphothreonine (threonine 35). Residues 35–44 (TPSSRPNRMA) are compositionally biased toward polar residues. A phosphoserine mark is found at serine 45, serine 69, and serine 97. Residues 110 to 129 (KPKDHVFLCEGEEPKSDLKA) are compositionally biased toward basic and acidic residues. Phosphoserine occurs at positions 132 and 144. Residues 139-167 (PGEKGSARKAGPAKEQEPMPTVDSHEPRL) show a composition bias toward basic and acidic residues.

This sequence belongs to the JUPITER family. Monomer. Dimer. Interacts with TPCN1. In terms of tissue distribution, expressed in liver, kidney, prostate, testis and uterus.

The protein localises to the cytoplasm. Its subcellular location is the nucleus. Nicotinic acid adenine dinucleotide phosphate (NAADP) binding protein required for NAADP-evoked intracellular calcium release. Confers NAADP-sensitivity to the two pore channels (TPCs) complex. Enables NAADP to activate Ca(2+) release from the endoplasmic reticulum through ryanodine receptors. Its function is as follows. (Microbial infection) Involved in the endolysosomal trafficking of human coronavirus SARS-CoV-2. This is Jupiter microtubule associated homolog 2 from Homo sapiens (Human).